Consider the following 305-residue polypeptide: Catechol 1,2-dioxygenase (305 aa).

4 residues coordinate Fe cation: Tyr-163, Tyr-197, His-221, and His-223.

This sequence belongs to the intradiol ring-cleavage dioxygenase family. Homodimer. Fe(3+) serves as cofactor.

The catalysed reaction is catechol + O2 = cis,cis-muconate + 2 H(+). It participates in aromatic compound metabolism; beta-ketoadipate pathway; 5-oxo-4,5-dihydro-2-furylacetate from catechol: step 1/3. The chain is Catechol 1,2-dioxygenase (catA) from Acinetobacter guillouiae (Acinetobacter genomosp. 11).